A 113-amino-acid polypeptide reads, in one-letter code: Putative pterin-4-alpha-carbinolamine dehydratase (113 aa).

This sequence belongs to the pterin-4-alpha-carbinolamine dehydratase family.

It carries out the reaction (4aS,6R)-4a-hydroxy-L-erythro-5,6,7,8-tetrahydrobiopterin = (6R)-L-erythro-6,7-dihydrobiopterin + H2O. This Legionella pneumophila (strain Paris) protein is Putative pterin-4-alpha-carbinolamine dehydratase.